We begin with the raw amino-acid sequence, 200 residues long: Oligoribonuclease (200 aa).

One can recognise an Exonuclease domain in the interval Leu20 to Leu183. Tyr141 is an active-site residue.

The protein belongs to the oligoribonuclease family.

Its subcellular location is the cytoplasm. 3'-to-5' exoribonuclease specific for small oligoribonucleotides. This is Oligoribonuclease from Burkholderia vietnamiensis (strain G4 / LMG 22486) (Burkholderia cepacia (strain R1808)).